The sequence spans 313 residues: Putative S-adenosyl-L-methionine-dependent methyltransferase MAP_4064c (313 aa).

S-adenosyl-L-methionine contacts are provided by residues aspartate 129 and 158-159 (DL).

This sequence belongs to the UPF0677 family.

In terms of biological role, exhibits S-adenosyl-L-methionine-dependent methyltransferase activity. The polypeptide is Putative S-adenosyl-L-methionine-dependent methyltransferase MAP_4064c (Mycolicibacterium paratuberculosis (strain ATCC BAA-968 / K-10) (Mycobacterium paratuberculosis)).